The following is a 201-amino-acid chain: Small ribosomal subunit protein uS4c (201 aa).

The segment at 15-43 is disordered; it reads LGALPGLTRKTPKSGSNQKKKFHSGKKEQ. The region spanning 89–150 is the S4 RNA-binding domain; that stretch reads MRLDNILFRL…NQRSKRLVQN (62 aa).

Belongs to the universal ribosomal protein uS4 family. Part of the 30S ribosomal subunit. Contacts protein S5. The interaction surface between S4 and S5 is involved in control of translational fidelity.

Its subcellular location is the plastid. The protein resides in the chloroplast. In terms of biological role, one of the primary rRNA binding proteins, it binds directly to 16S rRNA where it nucleates assembly of the body of the 30S subunit. Its function is as follows. With S5 and S12 plays an important role in translational accuracy. This Sorghum bicolor (Sorghum) protein is Small ribosomal subunit protein uS4c (rps4).